Consider the following 270-residue polypeptide: 3-phenylpropionate-dihydrodiol/cinnamic acid-dihydrodiol dehydrogenase (270 aa).

Residue 10 to 34 participates in NAD(+) binding; the sequence is FITGGGSGLGLALVERFIEEGAQVA. Residue Ser-143 coordinates substrate. Tyr-156 acts as the Proton acceptor in catalysis.

This sequence belongs to the short-chain dehydrogenases/reductases (SDR) family.

It carries out the reaction 3-(cis-5,6-dihydroxycyclohexa-1,3-dien-1-yl)propanoate + NAD(+) = 3-(2,3-dihydroxyphenyl)propanoate + NADH + H(+). The catalysed reaction is (2E)-3-(cis-5,6-dihydroxycyclohexa-1,3-dien-1-yl)prop-2-enoate + NAD(+) = (2E)-3-(2,3-dihydroxyphenyl)prop-2-enoate + NADH + H(+). It participates in aromatic compound metabolism; 3-phenylpropanoate degradation. In terms of biological role, converts 3-phenylpropionate-dihydrodiol (PP-dihydrodiol) and cinnamic acid-dihydrodiol (CI-dihydrodiol) into 3-(2,3-dihydroxylphenyl)propanoic acid (DHPP) and 2,3-dihydroxicinnamic acid (DHCI), respectively. This is 3-phenylpropionate-dihydrodiol/cinnamic acid-dihydrodiol dehydrogenase from Escherichia coli (strain ATCC 8739 / DSM 1576 / NBRC 3972 / NCIMB 8545 / WDCM 00012 / Crooks).